A 160-amino-acid chain; its full sequence is Allophycocyanin alpha chain (160 aa).

Position 70 is an N4-methylasparagine (Asn70). A (2R,3E)-phycocyanobilin-binding site is contributed by Cys80.

Belongs to the phycobiliprotein family. In terms of assembly, component of the phycobilisome. Heterodimer of an alpha and a beta chain. In terms of processing, contains one covalently linked phycocyanobilin chromophore.

Its subcellular location is the cellular thylakoid membrane. Functionally, light-harvesting photosynthetic bile pigment-protein from the phycobiliprotein complex. Allophycocyanin has a maximum absorption at approximately 650 nanometers. This Anabaena cylindrica protein is Allophycocyanin alpha chain (apcA).